Reading from the N-terminus, the 328-residue chain is Phospholipid scramblase 1 (328 aa).

A proline-rich domain (PRD) region spans residues 1–93 (MENHSKQTEA…NHPGGPGGTP (93 aa)). Positions 1-96 (MENHSKQTEA…GGPGGTPWMP (96 aa)) are disordered. The Cytoplasmic portion of the chain corresponds to 1–297 (MENHSKQTEA…IQFPLDLDVK (297 aa)). The SH3-binding 1 signature appears at 18–26 (PAGYPPPYP). The short motif at 22 to 25 (PPPY) is the PPxY motif element. The span at 28 to 47 (AAFQGPSDHAAYPIPQAGYQ) shows a compositional bias: low complexity. Pro residues predominate over residues 49-64 (PPGPYPGPQPGYPVPP). Positions 56-64 (PQPGYPVPP) match the SH3-binding 2 motif. Y83 carries the phosphotyrosine; by ABL modification. Residues 93–101 (PWMPAPPPP) carry the SH3-binding 3 motif. At T170 the chain carries Phosphothreonine; by PKC/PRKCD. 4 S-palmitoyl cysteine lipidation sites follow: C193, C194, C197, and C198. The Nuclear localization signal signature appears at 269 to 275 (SKQWSGF). The helical transmembrane segment at 298–314 (MKAVMLGACFLIDFMFF) threads the bilayer. At 315–328 (ERTGNEEQRSGAWQ) the chain is on the extracellular side.

It belongs to the phospholipid scramblase family. Forms homooligomers in the presence of calcium. Interacts with ABL. Interacts with RELT, RELL1 and RELL2. Interacts with OXSR1 in the presence of RELT. Interacts with OCLN, TOP2A and TOP2B. Interacts with TRPC1, TRPC4 and TRPC5. Interacts with ILDR1. Requires Ca(2+) as cofactor. Mg(2+) serves as cofactor. It depends on Zn(2+) as a cofactor. In terms of processing, phosphorylation at Thr-170 by PKC/PKCD increases its phospholipid scramblase activity during both cell stimulation and apoptosis. Phosphorylated by OXSR1 in the presence of RELT. Palmitoylation is required for its phospholipid scramblase activity. Palmitoylation regulates its localization to the cell membrane or the nucleus; trafficking to the cell membrane is dependent upon palmitoylation whereas in the absence of palmitoylation, localizes to the nucleus. As to expression, highly expressed in kidney, lung, liver and bone marrow, slightly in spleen, heart and macrophage.

Its subcellular location is the cell membrane. It localises to the nucleus. The protein resides in the cytoplasm. It is found in the perinuclear region. The enzyme catalyses a 1,2-diacyl-sn-glycero-3-phosphocholine(in) = a 1,2-diacyl-sn-glycero-3-phosphocholine(out). It catalyses the reaction a 1,2-diacyl-sn-glycero-3-phosphoethanolamine(in) = a 1,2-diacyl-sn-glycero-3-phosphoethanolamine(out). The catalysed reaction is a 1,2-diacyl-sn-glycero-3-phospho-L-serine(in) = a 1,2-diacyl-sn-glycero-3-phospho-L-serine(out). Functionally, catalyzes calcium-induced ATP-independent rapid bidirectional and non-specific distribution of phospholipids (lipid scrambling or lipid flip-flop) between the inner and outer leaflet of the plasma membrane resulting in collapse of the phospholipid asymmetry which leads to phosphatidylserine externalization on the cell surface. Mediates calcium-dependent phosphatidylserine externalization and apoptosis in neurons via its association with TRPC5. Also exhibits magnesium-dependent nuclease activity against double-stranded DNA and RNA but not single-stranded DNA and can enhance DNA decatenation mediated by TOP2A. Negatively regulates FcR-mediated phagocytosis in differentiated macrophages. May contribute to cytokine-regulated cell proliferation and differentiation. The polypeptide is Phospholipid scramblase 1 (Plscr1) (Mus musculus (Mouse)).